A 169-amino-acid chain; its full sequence is Cell division protein B3 (169 aa).

Its function is as follows. Part of a cell division machinery. May fulfill a coordination function between the Cdv proteins during cell division. This chain is Cell division protein B3, found in Sulfolobus acidocaldarius (strain ATCC 33909 / DSM 639 / JCM 8929 / NBRC 15157 / NCIMB 11770).